The chain runs to 322 residues: uncharacterized protein (322 aa).

To M.jannaschii MJ0640 and MJ0799.

This is an uncharacterized protein from Synechocystis sp. (strain ATCC 27184 / PCC 6803 / Kazusa).